The primary structure comprises 239 residues: Ubiquinone biosynthesis O-methyltransferase (239 aa).

The S-adenosyl-L-methionine site is built by Arg42, Gly62, Asp83, and Met127.

It belongs to the methyltransferase superfamily. UbiG/COQ3 family.

The catalysed reaction is a 3-demethylubiquinol + S-adenosyl-L-methionine = a ubiquinol + S-adenosyl-L-homocysteine + H(+). It catalyses the reaction a 3-(all-trans-polyprenyl)benzene-1,2-diol + S-adenosyl-L-methionine = a 2-methoxy-6-(all-trans-polyprenyl)phenol + S-adenosyl-L-homocysteine + H(+). It participates in cofactor biosynthesis; ubiquinone biosynthesis. Its function is as follows. O-methyltransferase that catalyzes the 2 O-methylation steps in the ubiquinone biosynthetic pathway. The chain is Ubiquinone biosynthesis O-methyltransferase from Pectobacterium carotovorum subsp. carotovorum (strain PC1).